The sequence spans 360 residues: Protein DVR-1 (360 aa).

The N-terminal stretch at 1-16 (MVWLRLWAFLHILAIV) is a signal peptide. The propeptide occupies 17 to 246 (TLDPELKRRE…LRCKRPRRKR (230 aa)). N-linked (GlcNAc...) asparagine glycosylation is found at Asn-113, Asn-181, and Asn-301. Intrachain disulfides connect Cys-259–Cys-325, Cys-288–Cys-357, and Cys-292–Cys-359.

The protein belongs to the TGF-beta family. Homodimer. In terms of tissue distribution, vegetal region of the egg.

It is found in the secreted. Serves to facilitate the differentiation of either mesoderm or endoderm either as a cofactor in an instructive signal or by providing permissive environment. The polypeptide is Protein DVR-1 (dvr1) (Xenopus laevis (African clawed frog)).